The sequence spans 172 residues: Dual-action ribosomal maturation protein DarP (172 aa).

It belongs to the DarP family.

The protein localises to the cytoplasm. In terms of biological role, member of a network of 50S ribosomal subunit biogenesis factors which assembles along the 30S-50S interface, preventing incorrect 23S rRNA structures from forming. Promotes peptidyl transferase center (PTC) maturation. The protein is Dual-action ribosomal maturation protein DarP of Ectopseudomonas mendocina (strain ymp) (Pseudomonas mendocina).